The chain runs to 251 residues: Flap endonuclease Xni (251 aa).

Aspartate 104 lines the Mg(2+) pocket. The 5'-3' exonuclease domain maps to 160 to 249 (VQPQQLPDYW…IDGNLQQLRL (90 aa)). K(+) contacts are provided by leucine 171, alanine 172, proline 180, valine 182, and isoleucine 185. Residues 184 to 189 (GIGPKS) are interaction with DNA.

This sequence belongs to the Xni family. Requires Mg(2+) as cofactor. K(+) is required as a cofactor.

Its function is as follows. Has flap endonuclease activity. During DNA replication, flap endonucleases cleave the 5'-overhanging flap structure that is generated by displacement synthesis when DNA polymerase encounters the 5'-end of a downstream Okazaki fragment. In Escherichia coli O45:K1 (strain S88 / ExPEC), this protein is Flap endonuclease Xni.